Here is a 669-residue protein sequence, read N- to C-terminus: DNA ligase (669 aa).

Residues 33–37, 82–83, and Glu114 contribute to the NAD(+) site; these read DAEYD and SL. The active-site N6-AMP-lysine intermediate is Lys116. NAD(+) contacts are provided by Arg137, Glu174, Lys291, and Lys315. Zn(2+)-binding residues include Cys409, Cys412, Cys427, and Cys433. The region spanning 593–669 is the BRCT domain; that stretch reads EIPQPLAGKV…QTEQDLLALL (77 aa).

Belongs to the NAD-dependent DNA ligase family. LigA subfamily. It depends on Mg(2+) as a cofactor. The cofactor is Mn(2+).

It catalyses the reaction NAD(+) + (deoxyribonucleotide)n-3'-hydroxyl + 5'-phospho-(deoxyribonucleotide)m = (deoxyribonucleotide)n+m + AMP + beta-nicotinamide D-nucleotide.. Functionally, DNA ligase that catalyzes the formation of phosphodiester linkages between 5'-phosphoryl and 3'-hydroxyl groups in double-stranded DNA using NAD as a coenzyme and as the energy source for the reaction. It is essential for DNA replication and repair of damaged DNA. This is DNA ligase from Vibrio vulnificus (strain CMCP6).